The primary structure comprises 421 residues: 3-hydroxy-3-methylglutaryl-coenzyme A reductase (421 aa).

Catalysis depends on charge relay system residues E109, K240, and D315. The active-site Proton donor is the H410.

The protein belongs to the HMG-CoA reductase family.

It carries out the reaction (R)-mevalonate + 2 NADP(+) + CoA = (3S)-3-hydroxy-3-methylglutaryl-CoA + 2 NADPH + 2 H(+). It functions in the pathway metabolic intermediate biosynthesis; (R)-mevalonate biosynthesis; (R)-mevalonate from acetyl-CoA: step 3/3. Converts HMG-CoA to mevalonate. In Aeropyrum pernix (strain ATCC 700893 / DSM 11879 / JCM 9820 / NBRC 100138 / K1), this protein is 3-hydroxy-3-methylglutaryl-coenzyme A reductase (hmgA).